A 1406-amino-acid chain; its full sequence is Enhancer of mRNA-decapping protein 4 (1406 aa).

An N-acetylalanine modification is found at A2. A phosphoserine mark is found at S3 and S6. Residue K125 is modified to N6-acetyllysine. WD repeat units lie at residues 174 to 214 (GFTG…GKIQ), 230 to 277 (NHFR…SSHN), 295 to 334 (GHSTCLSEGALSPDGTVLATASHDGFVKFWQIYIEGQDEP), and 342 to 393 (PHDG…CLQT). A phosphoserine mark is found at S560, S565, S583, and S585. Disordered regions lie at residues 604–631 (SLQQISASPSSSSSSSSSSSSSSSSSSS) and 667–686 (SLTLNSSSSSLQASPRSLLP). The segment covering 609–631 (SASPSSSSSSSSSSSSSSSSSSS) has biased composition (low complexity). Phosphoserine occurs at positions 680, 712, 727, and 729. Residues 719–744 (EPLGLPQASPSRTRSPDVISSASTAL) form a disordered region. A compositionally biased stretch (polar residues) spans 726-744 (ASPSRTRSPDVISSASTAL). T731 bears the Phosphothreonine mark. Phosphoserine occurs at positions 733 and 745. Disordered stretches follow at residues 782–855 (HLLS…NGLQ) and 873–951 (QRDS…VAEP). Polar residues-rich tracts occupy residues 823 to 832 (EVATPDSQVW) and 841 to 852 (ETCSTLTESPRN). At T826 the chain carries Phosphothreonine. Residues S849 and S876 each carry the phosphoserine modification. Residue T879 is modified to Phosphothreonine. S880, S884, S892, S895, and S897 each carry phosphoserine. Residue T906 is modified to Phosphothreonine. The stretch at 971–1030 (HNQEELLQRLCAQLEGLQSTVTDHVERALETRHEQEQRRLERALAEGQQRGGQLQEQLTQ) forms a coiled coil. At S1385 the chain carries Phosphoserine.

Belongs to the WD repeat EDC4 family. As to quaternary structure, part of a decapping complex consisting of DCP1A, DCP2, EDC3, EDC4 and probably DDX6. Part of a complex consisting of DCP1A, EDC3, EDC4 and DDX6. Part of a complex consisting of DCP1B, EDC3, EDC4 and DDX6. Interacts with DCP2. Interacts with RC3H1. Interacts with NBDY. Interacts with Tex19.1 and, probably, Tex19.2. Interacts with LSM14A. Interacts with DDX6.

The protein localises to the cytoplasm. The protein resides in the P-body. It is found in the nucleus. In terms of biological role, in the process of mRNA degradation, seems to play a role in mRNA decapping. Component of a complex containing DCP2 and DCP1A which functions in decapping of ARE-containing mRNAs. Promotes complex formation between DCP1A and DCP2. Enhances the catalytic activity of DCP2 (in vitro). This Mus musculus (Mouse) protein is Enhancer of mRNA-decapping protein 4.